The primary structure comprises 110 residues: V-type proton ATPase subunit F (110 aa).

It belongs to the V-ATPase F subunit family. As to quaternary structure, V-ATPase is a heteromultimeric enzyme made up of two complexes: the ATP-hydrolytic V1 complex and the proton translocation V0 complex. The V1 complex consists of three catalytic AB heterodimers that form a heterohexamer, three peripheral stalks each consisting of EG heterodimers, one central rotor including subunits D and F, and the regulatory subunits C and H. The proton translocation complex V0 consists of the proton transport subunit a, a ring of proteolipid subunits c9c'', rotary subunit d, subunits e and f, and two accessory subunits.

Its function is as follows. Subunit of the V1 complex of vacuolar(H+)-ATPase (V-ATPase), a multisubunit enzyme composed of a peripheral complex (V1) that hydrolyzes ATP and a membrane integral complex (V0) that translocates protons. V-ATPase is responsible for acidifying and maintaining the pH of intracellular compartments and in some cell types, is targeted to the plasma membrane, where it is responsible for acidifying the extracellular environment. In Xenopus laevis (African clawed frog), this protein is V-type proton ATPase subunit F (atp6s14).